We begin with the raw amino-acid sequence, 414 residues long: Phosphoglycerate kinase (414 aa).

Substrate-binding positions include 20-22, Arg37, 60-63, Arg117, and Arg164; these read DIN and HQSR. Residues Glu338 and 364-367 each bind ATP; that span reads GGHL.

Belongs to the phosphoglycerate kinase family. In terms of assembly, monomer.

It localises to the cytoplasm. The catalysed reaction is (2R)-3-phosphoglycerate + ATP = (2R)-3-phospho-glyceroyl phosphate + ADP. Its pathway is carbohydrate degradation; glycolysis; pyruvate from D-glyceraldehyde 3-phosphate: step 2/5. This chain is Phosphoglycerate kinase, found in Methanococcus maripaludis (strain DSM 14266 / JCM 13030 / NBRC 101832 / S2 / LL).